Consider the following 502-residue polypeptide: Glycerol kinase (502 aa).

Thr-14 is a binding site for ADP. ATP-binding residues include Thr-14, Thr-15, and Ser-16. Thr-14 serves as a coordination point for sn-glycerol 3-phosphate. Residue Arg-18 coordinates ADP. The sn-glycerol 3-phosphate site is built by Arg-84, Glu-85, Tyr-136, and Asp-246. Positions 84, 85, 136, 246, and 247 each coordinate glycerol. Residues Thr-268 and Gly-311 each contribute to the ADP site. Residues Thr-268, Gly-311, Gln-315, and Gly-412 each contribute to the ATP site. Residues Gly-412 and Asn-416 each contribute to the ADP site.

It belongs to the FGGY kinase family. Homotetramer and homodimer (in equilibrium). Heterodimer with EIIA-Glc. Binds 1 zinc ion per glycerol kinase EIIA-Glc dimer. The zinc ion is important for dimerization.

The catalysed reaction is glycerol + ATP = sn-glycerol 3-phosphate + ADP + H(+). The protein operates within polyol metabolism; glycerol degradation via glycerol kinase pathway; sn-glycerol 3-phosphate from glycerol: step 1/1. Its activity is regulated as follows. Activity of this regulatory enzyme is affected by several metabolites. Allosterically and non-competitively inhibited by fructose 1,6-bisphosphate (FBP) and unphosphorylated phosphocarrier protein EIIA-Glc (III-Glc), an integral component of the bacterial phosphotransferase (PTS) system. Key enzyme in the regulation of glycerol uptake and metabolism. Catalyzes the phosphorylation of glycerol to yield sn-glycerol 3-phosphate. The protein is Glycerol kinase of Escherichia coli O7:K1 (strain IAI39 / ExPEC).